We begin with the raw amino-acid sequence, 100 residues long: UPF0473 protein Lm4b_01511 (100 aa).

The protein belongs to the UPF0473 family.

The protein is UPF0473 protein Lm4b_01511 of Listeria monocytogenes serotype 4b (strain CLIP80459).